Here is a 590-residue protein sequence, read N- to C-terminus: Aspartate--tRNA(Asp/Asn) ligase (590 aa).

An L-aspartate-binding site is contributed by glutamate 175. The tract at residues 199 to 202 (QQYK) is aspartate. Residues arginine 221 and histidine 450 each contribute to the L-aspartate site. ATP is bound at residue 221–223 (RDE). Glutamate 484 is an ATP binding site. Arginine 491 contributes to the L-aspartate binding site. Residue 536–539 (GIDR) participates in ATP binding.

The protein belongs to the class-II aminoacyl-tRNA synthetase family. Type 1 subfamily. Homodimer.

The protein localises to the cytoplasm. The catalysed reaction is tRNA(Asx) + L-aspartate + ATP = L-aspartyl-tRNA(Asx) + AMP + diphosphate. In terms of biological role, aspartyl-tRNA synthetase with relaxed tRNA specificity since it is able to aspartylate not only its cognate tRNA(Asp) but also tRNA(Asn). Reaction proceeds in two steps: L-aspartate is first activated by ATP to form Asp-AMP and then transferred to the acceptor end of tRNA(Asp/Asn). The protein is Aspartate--tRNA(Asp/Asn) ligase of Azorhizobium caulinodans (strain ATCC 43989 / DSM 5975 / JCM 20966 / LMG 6465 / NBRC 14845 / NCIMB 13405 / ORS 571).